A 471-amino-acid polypeptide reads, in one-letter code: V-type ATP synthase beta chain (471 aa).

This sequence belongs to the ATPase alpha/beta chains family.

Functionally, produces ATP from ADP in the presence of a proton gradient across the membrane. The V-type beta chain is a regulatory subunit. This chain is V-type ATP synthase beta chain (atpB), found in Deinococcus radiodurans (strain ATCC 13939 / DSM 20539 / JCM 16871 / CCUG 27074 / LMG 4051 / NBRC 15346 / NCIMB 9279 / VKM B-1422 / R1).